The primary structure comprises 182 residues: Large ribosomal subunit protein uL5 (182 aa).

This sequence belongs to the universal ribosomal protein uL5 family. In terms of assembly, part of the 50S ribosomal subunit; part of the 5S rRNA/L5/L18/L25 subcomplex. Contacts the 5S rRNA and the P site tRNA. Forms a bridge to the 30S subunit in the 70S ribosome.

This is one of the proteins that bind and probably mediate the attachment of the 5S RNA into the large ribosomal subunit, where it forms part of the central protuberance. In the 70S ribosome it contacts protein S13 of the 30S subunit (bridge B1b), connecting the 2 subunits; this bridge is implicated in subunit movement. Contacts the P site tRNA; the 5S rRNA and some of its associated proteins might help stabilize positioning of ribosome-bound tRNAs. The sequence is that of Large ribosomal subunit protein uL5 from Mycoplasma mobile (strain ATCC 43663 / 163K / NCTC 11711) (Mesomycoplasma mobile).